Reading from the N-terminus, the 718-residue chain is Ribonuclease J (718 aa).

The segment at 1 to 130 is disordered; it reads MNDSRNRGRK…RGNRGGGRRN (130 aa). 2 stretches are compositionally biased toward low complexity: residues 55 to 91 and 100 to 118; these read AAQGAQGSQDSQGSQNAQGSQNRESGNNNRNRSNNNR and SGNANEGANNNSGNQNRQG. Zn(2+) is bound by residues histidine 220, histidine 222, aspartate 224, histidine 225, histidine 287, and aspartate 309. Residue 510–514 participates in substrate binding; sequence HTSGH. Position 536 (histidine 536) interacts with Zn(2+).

It belongs to the metallo-beta-lactamase superfamily. RNA-metabolizing metallo-beta-lactamase-like family. Bacterial RNase J subfamily. In terms of assembly, homodimer, may be a subunit of the RNA degradosome. Requires Zn(2+) as cofactor.

It localises to the cytoplasm. Its function is as follows. An RNase that has 5'-3' exonuclease and possibly endoonuclease activity. Involved in maturation of rRNA and in some organisms also mRNA maturation and/or decay. This chain is Ribonuclease J, found in Corynebacterium glutamicum (strain ATCC 13032 / DSM 20300 / JCM 1318 / BCRC 11384 / CCUG 27702 / LMG 3730 / NBRC 12168 / NCIMB 10025 / NRRL B-2784 / 534).